The following is an 80-amino-acid chain: uncharacterized protein (80 aa).

Residues 1–21 form the signal peptide; the sequence is MKKVLYGIFAISALAATSAWA. The interval 59-80 is disordered; that stretch reads AATGGGDGSNTGTTTTTTTSTQ. Over residues 68-80 the composition is skewed to low complexity; that stretch reads NTGTTTTTTTSTQ.

This is an uncharacterized protein from Escherichia coli O157:H7.